Consider the following 367-residue polypeptide: MLNVLMLGVGQCGNRILDAVNRQAFGGSRLAKYYSKQRFPSRVETIAINTAINDLKELKFTAAKDRLHVPNLHGVGANRSKGKQGFWENQEMILEEIEKRGDFDLIFVMTSVSGGTGSSFSPLMIHELKKRYKNATIVPIAVLPFREEGTIYLQNAAFCLREMIEVEADGMILVDNQYLKRFSGDIASAYDRINTMVAQRLLFLIEALDSEMLSVTDLGDFKTVMNGGLRMGTLGYYQADKKSPSIRAAIKNSLREVGLLYPANVDAGEAGRAMIVIQGSREYLNVDEITKEIESLTETIGHVFKGIVIKKGEPRVLSVLSLERAPGLVELYEKAKWAIQEERERKDRARSELYEAFEQINDLEEIY.

Residues 11-15 (QCGNR), Ser111, 115-117 (GTG), Glu148, Asn176, and Asn194 contribute to the GTP site.

It belongs to the CetZ family.

It localises to the cytoplasm. Functionally, involved in cell shape control. The chain is Tubulin-like protein CetZ from Methanothrix thermoacetophila (strain DSM 6194 / JCM 14653 / NBRC 101360 / PT) (Methanosaeta thermophila).